An 84-amino-acid chain; its full sequence is MERSNRKTRIGRVVSNKMDKTIVVAVETKVRHPLYGKIMNRTTKFKAHDENNTANINDKVLIMETRPLSKQKRWRLVEVVEKAK.

It belongs to the universal ribosomal protein uS17 family. As to quaternary structure, part of the 30S ribosomal subunit.

Functionally, one of the primary rRNA binding proteins, it binds specifically to the 5'-end of 16S ribosomal RNA. The polypeptide is Small ribosomal subunit protein uS17 (Clostridium botulinum (strain 657 / Type Ba4)).